The following is a 547-amino-acid chain: Chaperonin GroEL (547 aa).

ATP-binding positions include 30 to 33, lysine 51, 87 to 91, glycine 415, 479 to 481, and aspartate 495; these read TLGP, DGTTT, and NAA.

This sequence belongs to the chaperonin (HSP60) family. Forms a cylinder of 14 subunits composed of two heptameric rings stacked back-to-back. Interacts with the co-chaperonin GroES.

It is found in the cytoplasm. It catalyses the reaction ATP + H2O + a folded polypeptide = ADP + phosphate + an unfolded polypeptide.. Together with its co-chaperonin GroES, plays an essential role in assisting protein folding. The GroEL-GroES system forms a nano-cage that allows encapsulation of the non-native substrate proteins and provides a physical environment optimized to promote and accelerate protein folding. In Cupriavidus taiwanensis (strain DSM 17343 / BCRC 17206 / CCUG 44338 / CIP 107171 / LMG 19424 / R1) (Ralstonia taiwanensis (strain LMG 19424)), this protein is Chaperonin GroEL.